The primary structure comprises 323 residues: uncharacterized protein (323 aa).

It localises to the mitochondrion. This is an uncharacterized protein from Schizosaccharomyces pombe (strain 972 / ATCC 24843) (Fission yeast).